The following is a 378-amino-acid chain: Chaperone protein DnaJ 2 (378 aa).

Positions Asp-4–Gly-68 constitute a J domain. A CR-type zinc finger spans residues Gly-130 to Arg-212. Zn(2+)-binding residues include Cys-143, Cys-146, Cys-160, Cys-163, Cys-186, Cys-189, Cys-200, and Cys-203. CXXCXGXG motif repeat units follow at residues Cys-143–Gly-150, Cys-160–Gly-167, Cys-186–Gly-193, and Cys-200–Gly-207. Residues Arg-351–Arg-378 form a disordered region. Residues Gly-358–Leu-367 are compositionally biased toward polar residues.

The protein belongs to the DnaJ family. Homodimer. It depends on Zn(2+) as a cofactor.

It is found in the cytoplasm. In terms of biological role, participates actively in the response to hyperosmotic and heat shock by preventing the aggregation of stress-denatured proteins and by disaggregating proteins, also in an autonomous, DnaK-independent fashion. Unfolded proteins bind initially to DnaJ; upon interaction with the DnaJ-bound protein, DnaK hydrolyzes its bound ATP, resulting in the formation of a stable complex. GrpE releases ADP from DnaK; ATP binding to DnaK triggers the release of the substrate protein, thus completing the reaction cycle. Several rounds of ATP-dependent interactions between DnaJ, DnaK and GrpE are required for fully efficient folding. Also involved, together with DnaK and GrpE, in the DNA replication of plasmids through activation of initiation proteins. The protein is Chaperone protein DnaJ 2 of Streptomyces avermitilis (strain ATCC 31267 / DSM 46492 / JCM 5070 / NBRC 14893 / NCIMB 12804 / NRRL 8165 / MA-4680).